Reading from the N-terminus, the 1802-residue chain is Protein TIC 214 (1802 aa).

6 helical membrane passes run 19–39, 68–88, 91–111, 133–153, 176–196, and 227–247; these read IINS…FSIG, FIAG…HLAL, PHTI…WNNH, VFLN…SSML, VGWL…LVWI, and IFSI…PSPI.

This sequence belongs to the TIC214 family. In terms of assembly, part of the Tic complex.

The protein localises to the plastid. Its subcellular location is the chloroplast inner membrane. Functionally, involved in protein precursor import into chloroplasts. May be part of an intermediate translocation complex acting as a protein-conducting channel at the inner envelope. The sequence is that of Protein TIC 214 from Nasturtium officinale (Watercress).